Here is a 465-residue protein sequence, read N- to C-terminus: Pancreatic triacylglycerol lipase (465 aa).

The signal sequence occupies residues 1–16 (MLLVWSLALLLGAVAG). Intrachain disulfides connect Cys-20-Cys-26 and Cys-107-Cys-118. Ser-169 acts as the Nucleophile in catalysis. The active-site Charge relay system is the Asp-193. 4 residues coordinate Ca(2+): Glu-204, Arg-207, Asp-209, and Asp-212. A disulfide bridge connects residues Cys-254 and Cys-278. The Charge relay system role is filled by His-280. 3 disulfide bridges follow: Cys-302-Cys-313, Cys-316-Cys-321, and Cys-449-Cys-465. The PLAT domain maps to 355–465 (WRYKVSVTLS…EDVLLTLNAC (111 aa)).

Belongs to the AB hydrolase superfamily. Lipase family. As to quaternary structure, forms a 1:1 stoichiometric complex with (pro)colipase/CLPS. Expressed in many tissues with highest expression in liver. During hibernation there is a significant increases in expression in heart, white adipose tissue (WAT), and testis; but not in pancreas.

It localises to the secreted. It carries out the reaction a triacylglycerol + H2O = a diacylglycerol + a fatty acid + H(+). The enzyme catalyses 1,2,3-tributanoylglycerol + H2O = dibutanoylglycerol + butanoate + H(+). The catalysed reaction is 1,2,3-tri-(9Z-octadecenoyl)-glycerol + H2O = di-(9Z)-octadecenoylglycerol + (9Z)-octadecenoate + H(+). It catalyses the reaction all-trans-retinyl hexadecanoate + H2O = all-trans-retinol + hexadecanoate + H(+). It carries out the reaction 1,2-di-(9Z-octadecenoyl)-glycerol + H2O = (9Z-octadecenoyl)-glycerol + (9Z)-octadecenoate + H(+). Inhibited by bile salts, is reactivated by (pro)colipase/CLPS. In terms of biological role, plays an important role in fat metabolism. It preferentially splits the esters of long-chain fatty acids at positions 1 and 3, producing mainly 2-monoacylglycerol and free fatty acids, and shows considerably higher activity against insoluble emulsified substrates than against soluble ones. Plays a role in hibernation as a key enzyme that shows high activity at low temperatures. When expressed in the hibernating heart it liberates fatty acids from triglycerides at temperatures as low as 0 degrees Celsius. In Ictidomys tridecemlineatus (Thirteen-lined ground squirrel), this protein is Pancreatic triacylglycerol lipase (PNLIP).